The sequence spans 218 residues: GTP cyclohydrolase 1 (218 aa).

Positions 109, 112, and 180 each coordinate Zn(2+).

It belongs to the GTP cyclohydrolase I family. Toroid-shaped homodecamer, composed of two pentamers of five dimers.

The catalysed reaction is GTP + H2O = 7,8-dihydroneopterin 3'-triphosphate + formate + H(+). The protein operates within cofactor biosynthesis; 7,8-dihydroneopterin triphosphate biosynthesis; 7,8-dihydroneopterin triphosphate from GTP: step 1/1. This Mannheimia succiniciproducens (strain KCTC 0769BP / MBEL55E) protein is GTP cyclohydrolase 1.